A 256-amino-acid polypeptide reads, in one-letter code: UPF0246 protein Sde_3824 (256 aa).

It belongs to the UPF0246 family.

This Saccharophagus degradans (strain 2-40 / ATCC 43961 / DSM 17024) protein is UPF0246 protein Sde_3824.